The sequence spans 435 residues: Tubulin-like protein TubZ (435 aa).

GTP-binding positions include 25 to 26, 124 to 126, asparagine 185, and asparagine 209; these read MG and GTG. Positions 403–435 are disordered; sequence QEEKPKKKKLNFGAEPEAEVADDSQPTKKKLSF.

The protein belongs to the FtsZ family. TubZ subfamily. Polymerizes to form two-stranded filaments and bundles at higher concentration in the presence of GTP. Binds to the TubR-tubC protein DNA complex.

Its subcellular location is the cytoplasm. The enzyme catalyses GTP + H2O = GDP + phosphate + H(+). GTPase inhibited by GTP-gamma-S, which also stabilizes filaments. Its function is as follows. A tubulin-like, filament forming GTPase; the motor component of the type III plasmid partition system which ensures correct segregation of the pXO1 plasmid. Essential for plasmid replication. The filaments seed from a DNA centromere-like site (tubC)-TubR complex which extends to surround the TubZ filaments. Highly dynamic filaments grow at the plus end and depolymerize at the minus end, a process called treadmilling. TubR-tubC complexes track the depolymerizing minus end of the filament, probably pulling plasmid within the cell. Has a high GTPase activity; in the presence of GTP assembles into dynamic filaments which bind almost exclusively GDP. Filament formation is cooperative, requiring a critical concentration. Formation occurs very quickly and is followed by disassembly as GTP is consumed. Small amounts of GTP-gamma-S stabilize filaments. Has high GTP and dGTPase activity, 6-fold lower ATPase activity. Forms filaments in the presence of ATP that also disassemble. Weakly binds DNA in a GTP-dependent, non-sequence-specific manner; GTP hydrolysis is not required for DNA-binding. The protein is Tubulin-like protein TubZ of Bacillus anthracis.